The primary structure comprises 248 residues: NAD(P)H-quinone oxidoreductase subunit K 1 (248 aa).

Residues 1–2 constitute a propeptide that is removed on maturation; that stretch reads MS. The [4Fe-4S] cluster site is built by Cys-62, Cys-63, Cys-127, and Cys-158. The tract at residues 228–248 is disordered; sequence MGMPVPPALTTSQQKEQLNRG. A compositionally biased stretch (polar residues) spans 236–248; sequence LTTSQQKEQLNRG.

The protein belongs to the complex I 20 kDa subunit family. As to quaternary structure, NDH-1 can be composed of about 15 different subunits; different subcomplexes with different compositions have been identified which probably have different functions. [4Fe-4S] cluster is required as a cofactor.

The protein resides in the cellular thylakoid membrane. The catalysed reaction is a plastoquinone + NADH + (n+1) H(+)(in) = a plastoquinol + NAD(+) + n H(+)(out). The enzyme catalyses a plastoquinone + NADPH + (n+1) H(+)(in) = a plastoquinol + NADP(+) + n H(+)(out). Its function is as follows. NDH-1 shuttles electrons from an unknown electron donor, via FMN and iron-sulfur (Fe-S) centers, to quinones in the respiratory and/or the photosynthetic chain. The immediate electron acceptor for the enzyme in this species is believed to be plastoquinone. Couples the redox reaction to proton translocation, and thus conserves the redox energy in a proton gradient. Cyanobacterial NDH-1 also plays a role in inorganic carbon-concentration. The protein is NAD(P)H-quinone oxidoreductase subunit K 1 of Synechocystis sp. (strain ATCC 27184 / PCC 6803 / Kazusa).